Reading from the N-terminus, the 625-residue chain is MADQRMDISSTISDFMSPGPTDLLSSSLGTSGVDCNRKRKGSSTDYQESMDTDKDDPHGRLEYTEHQGRIKNAREAHSQIEKRRRDKMNSFIDELASLVPTCNAMSRKLDKLTVLRMAVQHMKTLRGATNPYTEANYKPTFLSDDELKHLILRAADGFLFVVGCDRGKILFVSESAFKILNYSQNDLIGQSLFDYLHPKDIAKVKEQLSSSDTAPRERLIDAKTGLPVKTDITPGPSRLCSGARRSFFCRMKCNRPSVKVEDKDFPSTCSKKKDRKSFCTIHSTGYLKSWPPTKMGLDEDNEPDNEGCNLSCLVAIGRLHSHVVPQPVNGEIRVKSMEYVSRHAIDGKFVFVDQRATAILAYLPQELLGTSCYEYFHQDDIGHLAECHRQVLQTREKITTNCYKFKIKDGSFITLRSRWFSFMNPWTKEVEYIVSTNTVVLANVLEGGDPTFPQLTASPRSMDSMLPSGEGGPKRTHPTVPGIPGGTRAGAGKIGRMIAEEIMEIHRIRGSSPSSCGSSPLNITSTPPPDASSPGGKKILNGGTPDIPSSGLLSGQAQENPGYPYSDSSSILGENPHIGIDMIDNDQGSSSPSNDEAAMAVIMSLLEADAGLGGPVDFSDLPWPL.

Residues 1–60 (MADQRMDISSTISDFMSPGPTDLLSSSLGTSGVDCNRKRKGSSTDYQESMDTDKDDPHGR) form a disordered region. A Phosphoserine; by GSK3-beta modification is found at S17. Low complexity predominate over residues 17 to 32 (SPGPTDLLSSSLGTSG). Residue T21 is modified to Phosphothreonine; by GSK3-beta. Residues 36 to 41 (NRKRKG) carry the Nuclear localization signal motif. Basic and acidic residues predominate over residues 51–60 (DTDKDDPHGR). The region spanning 72–125 (NAREAHSQIEKRRRDKMNSFIDELASLVPTCNAMSRKLDKLTVLRMAVQHMKTL) is the bHLH domain. S78 bears the Phosphoserine mark. S90 carries the phosphoserine; by CK2 modification. The short motif at 142-152 (LSDDELKHLIL) is the Nuclear export signal 1 element. One can recognise a PAS 1 domain in the interval 143 to 215 (SDDELKHLIL…EQLSSSDTAP (73 aa)). A Glycyl lysine isopeptide (Lys-Gly) (interchain with G-Cter in SUMO2 and SUMO3) cross-link involves residue K252. K259 participates in a covalent cross-link: Glycyl lysine isopeptide (Lys-Gly) (interchain with G-Cter in SUMO); alternate. A Glycyl lysine isopeptide (Lys-Gly) (interchain with G-Cter in SUMO2); alternate cross-link involves residue K259. A PAS 2 domain is found at 325-395 (PQPVNGEIRV…ECHRQVLQTR (71 aa)). The short motif at 360–368 (LAYLPQELL) is the Nuclear export signal 2 element. Residues 400–443 (TNCYKFKIKDGSFITLRSRWFSFMNPWTKEVEYIVSTNTVVLAN) enclose the PAC domain. 2 disordered regions span residues 454 to 491 (QLTA…RAGA) and 510 to 594 (GSSP…SPSN). An interaction with CIART region spans residues 507–587 (RIRGSSPSSC…IGIDMIDNDQ (81 aa)). The segment covering 510–520 (GSSPSSCGSSP) has biased composition (low complexity). At K537 the chain carries N6-acetyllysine.

Component of the circadian clock oscillator which includes the CRY1/2 proteins, CLOCK or NPAS2, BMAL1 or BMAL2, CSNK1D and/or CSNK1E, TIMELESS and the PER1/2/3 proteins. Forms a heterodimer with CLOCK. The CLOCK-BMAL1 heterodimer is required for E-box-dependent transactivation, for CLOCK nuclear translocation and degradation, and, for phosphorylation of both CLOCK and BMAL1. Part of a nuclear complex which also includes RACK1 and PRKCA; RACK1 and PRKCA are recruited to the complex in a circadian manner. Interacts with NPAS2. Interacts with EZH2. Interacts with SUMO3. Interacts with SIRT1. Interacts with AHR. Interacts with ID1, ID2 and ID3. Interacts with DDX4. Interacts with OGT. Interacts with EED and SUZ12. Interacts with MTA1. Interacts with CIART. Interacts with HSP90. Interacts with KAT2B and EP300. Interacts with BHLHE40/DEC1 and BHLHE41/DEC2. Interacts with RELB and the interaction is enhanced in the presence of CLOCK. Interacts with PER1, PER2, CRY1 and CRY2 and this interaction requires a translocation to the nucleus. Interaction of the CLOCK-BMAL1 heterodimer with PER or CRY inhibits transcription activation. Interaction of the CLOCK-BMAL1 with CRY1 is independent of DNA but with PER2 is off DNA. The CLOCK-BMAL1 heterodimer interacts with GSK3B. Interacts with KDM5A. Interacts with KMT2A; in a circadian manner. Interacts with UBE3A. Interacts with PRKCG. Interacts with MAGEL2. Interacts with NCOA2. Interacts with THRAP3. The CLOCK-BMAL1 heterodimer interacts with PASD1. Interacts with PASD1. Interacts with USP9X. Interacts with PIWIL2 (via PIWI domain). Interacts with HDAC3. Interacts with HNF4A. Ubiquitinated, leading to its proteasomal degradation. Deubiquitinated by USP9X. In terms of processing, O-glycosylated; contains O-GlcNAc. O-glycosylation by OGT prevents protein degradation by inhibiting ubiquitination. It also stabilizes the CLOCK-BMAL1 heterodimer thereby increasing CLOCK-BMAL1-mediated transcription of genes in the negative loop of the circadian clock such as PER1/2/3 and CRY1/2. Post-translationally, acetylated on Lys-537 by CLOCK during the repression phase of the circadian cycle. Acetylation facilitates recruitment of CRY1 protein and initiates the repression phase of the circadian cycle. Acetylated at Lys-537 by KAT5 during the activation phase of the cycle, leading to recruitment of the positive transcription elongation factor b (P-TEFb) and BRD4, followed by productive elongation of circadian transcripts. Deacetylated by SIRT1, which may result in decreased protein stability. Phosphorylated upon dimerization with CLOCK. Phosphorylation enhances the transcriptional activity, alters the subcellular localization and decreases the stability of the CLOCK-BMAL1 heterodimer by promoting its degradation. Phosphorylation shows circadian variations in the liver with a peak between CT10 to CT14. Phosphorylation at Ser-90 by CK2 is essential for its nuclear localization, its interaction with CLOCK and controls CLOCK nuclear entry. Dephosphorylation at Ser-78 is important for dimerization with CLOCK and transcriptional activity. In terms of processing, sumoylated on Lys-259 upon dimerization with CLOCK. Predominantly conjugated to poly-SUMO2/3 rather than SUMO1 and the level of these conjugates undergo rhythmic variation, peaking at CT9-CT12. Sumoylation localizes it exclusively to the PML body and promotes its ubiquitination in the PML body, ubiquitin-dependent proteasomal degradation and the transcriptional activity of the CLOCK-BMAL1 heterodimer. Post-translationally, undergoes lysosome-mediated degradation in a time-dependent manner in the liver.

Its subcellular location is the nucleus. It is found in the cytoplasm. The protein resides in the PML body. Transcriptional activator which forms a core component of the circadian clock. The circadian clock, an internal time-keeping system, regulates various physiological processes through the generation of approximately 24 hour circadian rhythms in gene expression, which are translated into rhythms in metabolism and behavior. It is derived from the Latin roots 'circa' (about) and 'diem' (day) and acts as an important regulator of a wide array of physiological functions including metabolism, sleep, body temperature, blood pressure, endocrine, immune, cardiovascular, and renal function. Consists of two major components: the central clock, residing in the suprachiasmatic nucleus (SCN) of the brain, and the peripheral clocks that are present in nearly every tissue and organ system. Both the central and peripheral clocks can be reset by environmental cues, also known as Zeitgebers (German for 'timegivers'). The predominant Zeitgeber for the central clock is light, which is sensed by retina and signals directly to the SCN. The central clock entrains the peripheral clocks through neuronal and hormonal signals, body temperature and feeding-related cues, aligning all clocks with the external light/dark cycle. Circadian rhythms allow an organism to achieve temporal homeostasis with its environment at the molecular level by regulating gene expression to create a peak of protein expression once every 24 hours to control when a particular physiological process is most active with respect to the solar day. Transcription and translation of core clock components (CLOCK, NPAS2, BMAL1, BMAL2, PER1, PER2, PER3, CRY1 and CRY2) plays a critical role in rhythm generation, whereas delays imposed by post-translational modifications (PTMs) are important for determining the period (tau) of the rhythms (tau refers to the period of a rhythm and is the length, in time, of one complete cycle). A diurnal rhythm is synchronized with the day/night cycle, while the ultradian and infradian rhythms have a period shorter and longer than 24 hours, respectively. Disruptions in the circadian rhythms contribute to the pathology of cardiovascular diseases, cancer, metabolic syndromes and aging. A transcription/translation feedback loop (TTFL) forms the core of the molecular circadian clock mechanism. Transcription factors, CLOCK or NPAS2 and BMAL1 or BMAL2, form the positive limb of the feedback loop, act in the form of a heterodimer and activate the transcription of core clock genes and clock-controlled genes (involved in key metabolic processes), harboring E-box elements (5'-CACGTG-3') within their promoters. The core clock genes: PER1/2/3 and CRY1/2 which are transcriptional repressors form the negative limb of the feedback loop and interact with the CLOCK|NPAS2-BMAL1|BMAL2 heterodimer inhibiting its activity and thereby negatively regulating their own expression. This heterodimer also activates nuclear receptors NR1D1/2 and RORA/B/G, which form a second feedback loop and which activate and repress BMAL1 transcription, respectively. BMAL1 positively regulates myogenesis and negatively regulates adipogenesis via the transcriptional control of the genes of the canonical Wnt signaling pathway. Plays a role in normal pancreatic beta-cell function; regulates glucose-stimulated insulin secretion via the regulation of antioxidant genes NFE2L2/NRF2 and its targets SESN2, PRDX3, CCLC and CCLM. Negatively regulates the mTORC1 signaling pathway; regulates the expression of MTOR and DEPTOR. Controls diurnal oscillations of Ly6C inflammatory monocytes; rhythmic recruitment of the PRC2 complex imparts diurnal variation to chemokine expression that is necessary to sustain Ly6C monocyte rhythms. Regulates the expression of HSD3B2, STAR, PTGS2, CYP11A1, CYP19A1 and LHCGR in the ovary and also the genes involved in hair growth. Plays an important role in adult hippocampal neurogenesis by regulating the timely entry of neural stem/progenitor cells (NSPCs) into the cell cycle and the number of cell divisions that take place prior to cell-cycle exit. Regulates the circadian expression of CIART and KLF11. The CLOCK-BMAL1 heterodimer regulates the circadian expression of SERPINE1/PAI1, VWF, B3, CCRN4L/NOC, NAMPT, DBP, MYOD1, PPARGC1A, PPARGC1B, SIRT1, GYS2, F7, NGFR, GNRHR, BHLHE40/DEC1, ATF4, MTA1, KLF10 and also genes implicated in glucose and lipid metabolism. Promotes rhythmic chromatin opening, regulating the DNA accessibility of other transcription factors. The NPAS2-BMAL1 heterodimer positively regulates the expression of MAOA, F7 and LDHA and modulates the circadian rhythm of daytime contrast sensitivity by regulating the rhythmic expression of adenylate cyclase type 1 (ADCY1) in the retina. The preferred binding motif for the CLOCK-BMAL1 heterodimer is 5'-CACGTGA-3', which contains a flanking adenine nucleotide at the 3-prime end of the canonical 6-nucleotide E-box sequence. CLOCK specifically binds to the half-site 5'-CAC-3', while BMAL1 binds to the half-site 5'-GTGA-3'. The CLOCK-BMAL1 heterodimer also recognizes the non-canonical E-box motifs 5'-AACGTGA-3' and 5'-CATGTGA-3'. Essential for the rhythmic interaction of CLOCK with ASS1 and plays a critical role in positively regulating CLOCK-mediated acetylation of ASS1. Plays a role in protecting against lethal sepsis by limiting the expression of immune checkpoint protein CD274 in macrophages in a PKM2-dependent manner. Regulates the diurnal rhythms of skeletal muscle metabolism via transcriptional activation of genes promoting triglyceride synthesis (DGAT2) and metabolic efficiency (COQ10B). This is Basic helix-loop-helix ARNT-like protein 1 (BMAL1) from Pongo abelii (Sumatran orangutan).